A 51-amino-acid chain; its full sequence is ATP synthase F(1) complex subunit epsilon, mitochondrial (51 aa).

N6-acetyllysine; alternate occurs at positions 21, 32, and 37. An N6-succinyllysine; alternate mark is found at Lys21, Lys32, and Lys37. Position 44 is an N6-acetyllysine (Lys44).

Belongs to the eukaryotic ATPase epsilon family. In terms of assembly, component of the ATP synthase complex composed at least of ATP5F1A/subunit alpha, ATP5F1B/subunit beta, ATP5MC1/subunit c (homooctomer), MT-ATP6/subunit a, MT-ATP8/subunit 8, ATP5ME/subunit e, ATP5MF/subunit f, ATP5MG/subunit g, ATP5MK/subunit k, ATP5MJ/subunit j, ATP5F1C/subunit gamma, ATP5F1D/subunit delta, ATP5F1E/subunit epsilon, ATP5PF/subunit F6, ATP5PB/subunit b, ATP5PD/subunit d, ATP5PO/subunit OSCP. ATP synthase complex consists of a soluble F(1) head domain (subunits alpha(3) and beta(3)) - the catalytic core - and a membrane F(0) domain - the membrane proton channel (subunits c, a, 8, e, f, g, k and j). These two domains are linked by a central stalk (subunits gamma, delta, and epsilon) rotating inside the F1 region and a stationary peripheral stalk (subunits F6, b, d, and OSCP).

Its subcellular location is the mitochondrion. It localises to the mitochondrion inner membrane. Its function is as follows. Subunit epsilon, of the mitochondrial membrane ATP synthase complex (F(1)F(0) ATP synthase or Complex V) that produces ATP from ADP in the presence of a proton gradient across the membrane which is generated by electron transport complexes of the respiratory chain. ATP synthase complex consist of a soluble F(1) head domain - the catalytic core - and a membrane F(1) domain - the membrane proton channel. These two domains are linked by a central stalk rotating inside the F(1) region and a stationary peripheral stalk. During catalysis, ATP synthesis in the catalytic domain of F(1) is coupled via a rotary mechanism of the central stalk subunits to proton translocation. In vivo, can only synthesize ATP although its ATP hydrolase activity can be activated artificially in vitro. May be essential for the assembly of F(1) and may play an important role in the incorporation of the hydrophobic subunit c into the F(1)-c oligomer rotor of the mitochondrial ATP synthase complex. The polypeptide is ATP synthase F(1) complex subunit epsilon, mitochondrial (Rattus norvegicus (Rat)).